Consider the following 251-residue polypeptide: Flap endonuclease Xni (251 aa).

D104 provides a ligand contact to Mg(2+). Positions 160–249 (VLPRQLPDYW…IDGNLQQLRL (90 aa)) constitute a 5'-3' exonuclease domain. K(+)-binding residues include L171, A172, P180, V182, and I185. Residues 184 to 189 (GIGPKS) are interaction with DNA.

The protein belongs to the Xni family. Mg(2+) is required as a cofactor. The cofactor is K(+).

Its function is as follows. Has flap endonuclease activity. During DNA replication, flap endonucleases cleave the 5'-overhanging flap structure that is generated by displacement synthesis when DNA polymerase encounters the 5'-end of a downstream Okazaki fragment. The protein is Flap endonuclease Xni of Salmonella schwarzengrund (strain CVM19633).